The following is a 525-amino-acid chain: GMP synthase [glutamine-hydrolyzing] (525 aa).

A Glutamine amidotransferase type-1 domain is found at 9 to 207 (RILILDFGSQ…VRDICQCEAL (199 aa)). Cys86 serves as the catalytic Nucleophile. Active-site residues include His181 and Glu183. The GMPS ATP-PPase domain maps to 208–400 (WTPAKIIDDA…LGLPYDMLYR (193 aa)). ATP is bound at residue 235–241 (SGGVDSS).

Homodimer.

The enzyme catalyses XMP + L-glutamine + ATP + H2O = GMP + L-glutamate + AMP + diphosphate + 2 H(+). It participates in purine metabolism; GMP biosynthesis; GMP from XMP (L-Gln route): step 1/1. Its function is as follows. Catalyzes the synthesis of GMP from XMP. The chain is GMP synthase [glutamine-hydrolyzing] from Salmonella paratyphi B (strain ATCC BAA-1250 / SPB7).